The chain runs to 299 residues: Methionyl-tRNA formyltransferase (299 aa).

Residue 109–112 (SLLP) coordinates (6S)-5,6,7,8-tetrahydrofolate.

The protein belongs to the Fmt family.

The catalysed reaction is L-methionyl-tRNA(fMet) + (6R)-10-formyltetrahydrofolate = N-formyl-L-methionyl-tRNA(fMet) + (6S)-5,6,7,8-tetrahydrofolate + H(+). Its function is as follows. Attaches a formyl group to the free amino group of methionyl-tRNA(fMet). The formyl group appears to play a dual role in the initiator identity of N-formylmethionyl-tRNA by promoting its recognition by IF2 and preventing the misappropriation of this tRNA by the elongation apparatus. This chain is Methionyl-tRNA formyltransferase, found in Wolbachia sp. subsp. Drosophila simulans (strain wRi).